Reading from the N-terminus, the 404-residue chain is Serpin-Z2B (404 aa).

The interval 349–373 (GTEAAAATACTMKFLCLTLTSPVDF) is RCL.

The protein belongs to the serpin family.

Functionally, probable serine protease inhibitor. The chain is Serpin-Z2B from Oryza sativa subsp. japonica (Rice).